Consider the following 120-residue polypeptide: Phosphoribosyl-ATP pyrophosphatase (120 aa).

This sequence belongs to the PRA-PH family.

It is found in the cytoplasm. It catalyses the reaction 1-(5-phospho-beta-D-ribosyl)-ATP + H2O = 1-(5-phospho-beta-D-ribosyl)-5'-AMP + diphosphate + H(+). It functions in the pathway amino-acid biosynthesis; L-histidine biosynthesis; L-histidine from 5-phospho-alpha-D-ribose 1-diphosphate: step 2/9. The sequence is that of Phosphoribosyl-ATP pyrophosphatase from Methylibium petroleiphilum (strain ATCC BAA-1232 / LMG 22953 / PM1).